A 157-amino-acid polypeptide reads, in one-letter code: Endoribonuclease YbeY (157 aa).

Residues His118, His122, and His128 each contribute to the Zn(2+) site.

Belongs to the endoribonuclease YbeY family. The cofactor is Zn(2+).

The protein resides in the cytoplasm. Functionally, single strand-specific metallo-endoribonuclease involved in late-stage 70S ribosome quality control and in maturation of the 3' terminus of the 16S rRNA. The protein is Endoribonuclease YbeY of Bordetella bronchiseptica (strain ATCC BAA-588 / NCTC 13252 / RB50) (Alcaligenes bronchisepticus).